The chain runs to 354 residues: MNTLFMHCRPGFEGEVCAEISEHAALLGVAGYAKGKPQSACAEFVCTEPDGAQRLMHELRFAQLIFPRQWARGAFVELPETDRISVLLEHLADLPVCGSLWLEVLDSNEGKELSTFCRKFEVPLRKALEKAGRLVDDARRPRLLLTFISGRRVFLGLAEADNSALWPMGIPRLKFPREAPSRSTLKLEEAWHQFIPREQWEQRLNDDMTGVDLGASPGGWTYQLVKRGMLVTAIDNGPMAESLMDTGLVTHLMADGFTWKPKHTVDWMVCDIVEKPARTASLIETWLGEGLCREAVVNLKLPMKQRHAEVRKLLDRMEAGFKERKVKVSIACKQLYHDREEVTCHLRRLDLKPH.

Residues Ser-183, 216 to 219 (SPGG), Asp-235, Asp-255, and Asp-271 each bind S-adenosyl-L-methionine. The active-site Proton acceptor is Lys-300.

The protein belongs to the class I-like SAM-binding methyltransferase superfamily. RNA methyltransferase RlmE family. RlmM subfamily. Monomer.

It is found in the cytoplasm. The catalysed reaction is cytidine(2498) in 23S rRNA + S-adenosyl-L-methionine = 2'-O-methylcytidine(2498) in 23S rRNA + S-adenosyl-L-homocysteine + H(+). Functionally, catalyzes the 2'-O-methylation at nucleotide C2498 in 23S rRNA. This Pseudomonas entomophila (strain L48) protein is Ribosomal RNA large subunit methyltransferase M.